Reading from the N-terminus, the 117-residue chain is Large ribosomal subunit protein bL19 (117 aa).

This sequence belongs to the bacterial ribosomal protein bL19 family.

In terms of biological role, this protein is located at the 30S-50S ribosomal subunit interface and may play a role in the structure and function of the aminoacyl-tRNA binding site. The polypeptide is Large ribosomal subunit protein bL19 (Shewanella sediminis (strain HAW-EB3)).